The chain runs to 503 residues: MVLLGLLQSGGWVLGQAMEQVTGGNLLSTLLIACAFTLSLVYLFRLAVGHMVQLPAGAKSPPHIYSPIPFLGHAIAFGKSPIEFLENAYEKYGPVFSFTMVGKTFTYLLGSDAAALLFNSKNEDLNAEEVYGRLTTPVFGKGVAYDVPNAIFLEQKKIIKSGLNIAHFKQYVPIIEKEAKEYFQSWGESGERNVFEALSELIILTASHCLHGKEIRSQLNEKVAQLYADLDGGFTHAAWLLPAWLPLPSFRRRDRAHREIKNIFYKAIQKRRLSKEPAEDILQTLLDSTYKDGRPLTDEEISGMLIGLLLAGQHTSSTTSAWMGFFLAKDKPLQEKCYLEQKAVCGEDLPPLTYDQLKDLNLLDRCIKETLRLRPPIMTMMRMAKTPQTVAGYTIPPGHQVCVSPTVNQRLKDSWAERLDFNPDRYLQDNPASGEKFAYVPFGAGRHRCVGENFAYVQIKTIWSTMLRLYEFDLINGYFPTVNYTTMIHTPENPVIRYKRRSK.

A helical transmembrane segment spans residues 24 to 44; sequence GNLLSTLLIACAFTLSLVYLF. Cys449 serves as a coordination point for heme.

This sequence belongs to the cytochrome P450 family. Heme serves as cofactor. In terms of processing, ubiquitinated by MARCHF6, leading to proteasomal degradation.

It is found in the endoplasmic reticulum membrane. Its subcellular location is the microsome membrane. It catalyses the reaction a 14alpha-methyl steroid + 3 reduced [NADPH--hemoprotein reductase] + 3 O2 = a Delta(14) steroid + formate + 3 oxidized [NADPH--hemoprotein reductase] + 4 H2O + 4 H(+). The enzyme catalyses lanosterol + 3 reduced [NADPH--hemoprotein reductase] + 3 O2 = 4,4-dimethyl-5alpha-cholesta-8,14,24-trien-3beta-ol + formate + 3 oxidized [NADPH--hemoprotein reductase] + 4 H2O + 4 H(+). The catalysed reaction is 24,25-dihydrolanosterol + 3 reduced [NADPH--hemoprotein reductase] + 3 O2 = 4,4-dimethyl-8,14-cholestadien-3beta-ol + formate + 3 oxidized [NADPH--hemoprotein reductase] + 4 H2O + 4 H(+). It carries out the reaction a 14alpha-methyl steroid + reduced [NADPH--hemoprotein reductase] + O2 = a 14alpha-hydroxymethyl steroid + oxidized [NADPH--hemoprotein reductase] + H2O + H(+). It catalyses the reaction a 14alpha-hydroxymethyl steroid + reduced [NADPH--hemoprotein reductase] + O2 = a 14alpha-formyl steroid + oxidized [NADPH--hemoprotein reductase] + 2 H2O + H(+). The enzyme catalyses a 14alpha-formyl steroid + reduced [NADPH--hemoprotein reductase] + O2 = a Delta(14) steroid + formate + oxidized [NADPH--hemoprotein reductase] + H2O + 2 H(+). The catalysed reaction is lanosterol + reduced [NADPH--hemoprotein reductase] + O2 = 32-hydroxylanosterol + oxidized [NADPH--hemoprotein reductase] + H2O + H(+). It carries out the reaction 32-hydroxylanosterol + reduced [NADPH--hemoprotein reductase] + O2 = 32-oxolanosterol + oxidized [NADPH--hemoprotein reductase] + 2 H2O + H(+). It catalyses the reaction 32-oxolanosterol + reduced [NADPH--hemoprotein reductase] + O2 = 4,4-dimethyl-5alpha-cholesta-8,14,24-trien-3beta-ol + formate + oxidized [NADPH--hemoprotein reductase] + H2O + 2 H(+). The enzyme catalyses 24,25-dihydrolanosterol + reduced [NADPH--hemoprotein reductase] + O2 = 32-hydroxy-24,25-dihydrolanosterol + oxidized [NADPH--hemoprotein reductase] + H2O + H(+). The catalysed reaction is 32-hydroxy-24,25-dihydrolanosterol + reduced [NADPH--hemoprotein reductase] + O2 = 32-oxo-24,25-dihydrolanosterol + oxidized [NADPH--hemoprotein reductase] + 2 H2O + H(+). It carries out the reaction 32-oxo-24,25-dihydrolanosterol + reduced [NADPH--hemoprotein reductase] + O2 = 4,4-dimethyl-8,14-cholestadien-3beta-ol + formate + oxidized [NADPH--hemoprotein reductase] + H2O + 2 H(+). Its pathway is steroid biosynthesis; zymosterol biosynthesis; zymosterol from lanosterol: step 1/6. Inhibited by azalanstat. Inhibited by azole antifungal agents ketoconazole, itraconazole and fluconazole. Functionally, sterol 14alpha-demethylase that plays a critical role in the cholesterol biosynthesis pathway, being cholesterol the major sterol component in mammalian membranes as well as a precursor for bile acid and steroid hormone synthesis. Cytochrome P450 monooxygenase that catalyzes the three-step oxidative removal of the 14alpha-methyl group (C-32) of sterols such as lanosterol (lanosta-8,24-dien-3beta-ol) and 24,25-dihydrolanosterol (DHL) in the form of formate, and converts the sterols to 4,4-dimethyl-5alpha-cholesta-8,14,24-trien-3beta-ol and 4,4-dimethyl-8,14-cholestadien-3beta-ol, respectively, which are intermediates of cholesterol biosynthesis. Can also demethylate substrates not intrinsic to mammals, such as eburicol (24-methylene-24,25-dihydrolanosterol), but at a lower rate than DHL. The chain is Lanosterol 14-alpha demethylase from Mus musculus (Mouse).